The following is a 1487-amino-acid chain: Major viral transcription factor ICP4 homolog (1487 aa).

Disordered stretches follow at residues 41–295 (AAPD…LPPG), 310–370 (LAKT…AEEA), and 803–1007 (PPTR…HTPR). The segment covering 66 to 75 (VIPPPSPAPE) has biased composition (pro residues). Low complexity-rich tracts occupy residues 165-193 (PSSASPGGGSPAPRVRSISISSSSSSSSS) and 201-213 (DGAGASSSSSSSS). The span at 214-224 (DDSDSDEGGEE) shows a compositional bias: acidic residues. Positions 235 to 272 (AAKTPSAAGSPGPSSGGDRPAAGAATPKSCRSGAASPG) are enriched in low complexity. Over residues 273–285 (APAPAPASAPAPS) the composition is skewed to pro residues. Composition is skewed to low complexity over residues 807–829 (SQQPSSSSPGGEPFSGSAAAEGS), 849–860 (PSSHSQSPQHSQ), and 867–877 (ATTATCCRATQ). The segment covering 878–893 (TNARSRGQQHQPQKAR) has biased composition (polar residues). A compositionally biased stretch (basic residues) spans 920–929 (HGRPRGKSGK). Residues 938 to 951 (AAQAGASASFSSSA) are compositionally biased toward low complexity. The span at 988–1007 (GPDRRGGFRRVPRGDCHTPR) shows a compositional bias: basic and acidic residues.

This sequence belongs to the herpesviridae ICP4 family. A long stretch of serine residues may be a major site of phosphorylation.

Its subcellular location is the host nucleus. Functionally, this IE protein is a multifunctional protein capable of migrating to the nucleus, binding to DNA, trans-activating other viral genes, and autoregulating its own synthesis. The polypeptide is Major viral transcription factor ICP4 homolog (IE) (Equus caballus (Horse)).